The following is a 269-amino-acid chain: Peptide deformylase 1A, chloroplastic/mitochondrial (269 aa).

Residues 1–60 constitute a chloroplast and mitochondrion transit peptide; sequence MGLHRDEATAMETLFRVSLRLLPVSAAVTCRSIRFPVSRPGSSHLLNRKLYNLPTSSSSS. Residues 123–126 and glycine 187 each bind substrate; that span reads PGVG. Cysteine 188 contributes to the Zn(2+) binding site. The tract at residues 191 to 196 is dimerization; it reads VDGFRA. Histidine 230 is a binding site for Zn(2+). Glutamate 231 is a catalytic residue. Histidine 234 provides a ligand contact to Zn(2+). The tract at residues 236–254 is dimerization; the sequence is DGNLYVDKMVPRTFRTVDN.

The protein belongs to the polypeptide deformylase family. As to quaternary structure, homodimer. Zn(2+) serves as cofactor. In terms of tissue distribution, expressed in roots, leaves, flowers and siliques.

The protein resides in the plastid. Its subcellular location is the chloroplast stroma. It localises to the mitochondrion. The enzyme catalyses N-terminal N-formyl-L-methionyl-[peptide] + H2O = N-terminal L-methionyl-[peptide] + formate. Its activity is regulated as follows. Inhibited by actinonin. Its function is as follows. Removes the formyl group from the N-terminal Met of newly synthesized proteins. This Arabidopsis thaliana (Mouse-ear cress) protein is Peptide deformylase 1A, chloroplastic/mitochondrial (PDF1A).